The sequence spans 459 residues: 11S globulin seed storage protein 2 (459 aa).

Residues 1 to 21 (MVAFKFLLALSLSLLVSAAIA) form the signal peptide. Intrachain disulfides connect Cys-34–Cys-67 and Cys-110–Cys-284. 2 Cupin type-1 domains span residues 37–237 (QRIS…ETIR) and 290–439 (TNVE…NQAQ). A disordered region spans residues 118-139 (RSQRTMERTEASEQQDRGSVRD). Residues 121–139 (RTMERTEASEQQDRGSVRD) show a composition bias toward basic and acidic residues.

The protein belongs to the 11S seed storage protein (globulins) family. In terms of assembly, homohexamer. Each subunit is composed of an acidic and a basic chain derived from a single precursor and linked by a disulfide bond. As to expression, expressed in seeds (at protein level). Expressed in seeds.

Functionally, seed storage protein. The protein is 11S globulin seed storage protein 2 of Sesamum indicum (Oriental sesame).